A 336-amino-acid polypeptide reads, in one-letter code: UPF0065 protein in tcbD-tcbE intergenic region (336 aa).

The signal sequence occupies residues 1-32 (MHSSKCPDLANIGRRRVLAGIALAMTTSSTRA).

The protein belongs to the UPF0065 (bug) family.

It localises to the periplasm. This Pseudomonas sp. (strain P51) protein is UPF0065 protein in tcbD-tcbE intergenic region.